The following is a 653-amino-acid chain: Pentatricopeptide repeat-containing protein At3g14730 (653 aa).

PPR repeat units lie at residues 59–93, 95–119, 125–159, 160–193, 194–224, 226–260, 261–295, 296–326, 327–361, 362–396, 401–431, 432–466, 467–497, and 503–537; these read NVAT…GFLD, SPRA…VLVF, DVFG…GILP, DKYT…GFDS, DCYV…LPDR, DSVL…GVGV, SRHT…GSGS, DIVV…MDER, DLFT…GIRP, DIVT…GLLN, NEFI…MRVK, DSAS…GVKP, DEIT…METV, and TSDH…DNPV. The type E motif stretch occupies residues 538–613; sequence VWRSILSSCR…TPGCSWIVLK (76 aa). The interval 614–644 is type E(+) motif; it reads NGVHTFFTGNQTHPEFKSIHDWLSLVISHMH.

The protein belongs to the PPR family. PCMP-E subfamily.

The chain is Pentatricopeptide repeat-containing protein At3g14730 (PCMP-E31) from Arabidopsis thaliana (Mouse-ear cress).